The primary structure comprises 143 residues: NADH-quinone oxidoreductase subunit A (143 aa).

The next 3 helical transmembrane spans lie at 8–28 (FGNV…GYLT), 63–83 (FYVV…LFPW), and 93–113 (FALV…VYAW).

The protein belongs to the complex I subunit 3 family. In terms of assembly, NDH-1 is composed of 14 different subunits. Subunits NuoA, H, J, K, L, M, N constitute the membrane sector of the complex.

The protein resides in the cell inner membrane. It carries out the reaction a quinone + NADH + 5 H(+)(in) = a quinol + NAD(+) + 4 H(+)(out). NDH-1 shuttles electrons from NADH, via FMN and iron-sulfur (Fe-S) centers, to quinones in the respiratory chain. The immediate electron acceptor for the enzyme in this species is believed to be a menaquinone. Couples the redox reaction to proton translocation (for every two electrons transferred, four hydrogen ions are translocated across the cytoplasmic membrane), and thus conserves the redox energy in a proton gradient. The polypeptide is NADH-quinone oxidoreductase subunit A (Chlorobium phaeovibrioides (strain DSM 265 / 1930) (Prosthecochloris vibrioformis (strain DSM 265))).